The following is a 102-amino-acid chain: RNA-binding protein Hfq (102 aa).

The Sm domain maps to 9-68; the sequence is DPFLNALRRERVPVSIYLVNGIKLQGQIESFDQFVILLKNTVSQMVYKHAISTVVPSRPV. Residues 63-102 form a disordered region; the sequence is VPSRPVSHHSNNAGGGSSNYHHGGSAQGSSAPQQDSDDAE. Low complexity predominate over residues 70–86; it reads HHSNNAGGGSSNYHHGG.

It belongs to the Hfq family. As to quaternary structure, homohexamer.

In terms of biological role, RNA chaperone that binds small regulatory RNA (sRNAs) and mRNAs to facilitate mRNA translational regulation in response to envelope stress, environmental stress and changes in metabolite concentrations. Also binds with high specificity to tRNAs. The polypeptide is RNA-binding protein Hfq (Klebsiella pneumoniae (strain 342)).